Reading from the N-terminus, the 473-residue chain is Photosystem II CP43 reaction center protein (473 aa).

A propeptide spanning residues 1–14 is cleaved from the precursor; the sequence is MKILYSLRRFYHVE. The residue at position 15 (T15) is an N-acetylthreonine. The residue at position 15 (T15) is a Phosphothreonine. The next 5 helical transmembrane spans lie at 69-93, 134-155, 178-200, 255-275, and 291-312; these read LFEV…PHLA, LLGP…KDRN, KALY…RKIT, KPFA…LSYS, and WFNN…ASQA. E367 provides a ligand contact to [CaMn4O5] cluster. The helical transmembrane segment at 447–471 threads the bilayer; the sequence is RARAAAAGFEKGIDRDLEPVLYMNP.

Belongs to the PsbB/PsbC family. PsbC subfamily. As to quaternary structure, PSII is composed of 1 copy each of membrane proteins PsbA, PsbB, PsbC, PsbD, PsbE, PsbF, PsbH, PsbI, PsbJ, PsbK, PsbL, PsbM, PsbT, PsbX, PsbY, PsbZ, Psb30/Ycf12, at least 3 peripheral proteins of the oxygen-evolving complex and a large number of cofactors. It forms dimeric complexes. The cofactor is Binds multiple chlorophylls and provides some of the ligands for the Ca-4Mn-5O cluster of the oxygen-evolving complex. It may also provide a ligand for a Cl- that is required for oxygen evolution. PSII binds additional chlorophylls, carotenoids and specific lipids.. Post-translationally, phosphorylated on threonine residue(s); phosphorylation increases with increasing light levels.

It is found in the plastid. Its subcellular location is the chloroplast thylakoid membrane. In terms of biological role, one of the components of the core complex of photosystem II (PSII). It binds chlorophyll and helps catalyze the primary light-induced photochemical processes of PSII. PSII is a light-driven water:plastoquinone oxidoreductase, using light energy to abstract electrons from H(2)O, generating O(2) and a proton gradient subsequently used for ATP formation. This Secale cereale (Rye) protein is Photosystem II CP43 reaction center protein.